We begin with the raw amino-acid sequence, 506 residues long: Ribose import ATP-binding protein RbsA (506 aa).

ABC transporter domains follow at residues 5–237 and 249–492; these read VQLI…VGRP and PFGA…LAIE. 37–44 serves as a coordination point for ATP; sequence GENGAGKS.

It belongs to the ABC transporter superfamily. Ribose importer (TC 3.A.1.2.1) family. In terms of assembly, the complex is composed of an ATP-binding protein (RbsA), two transmembrane proteins (RbsC) and a solute-binding protein (RbsB).

It is found in the cell inner membrane. The catalysed reaction is D-ribose(out) + ATP + H2O = D-ribose(in) + ADP + phosphate + H(+). In terms of biological role, part of the ABC transporter complex RbsABC involved in ribose import. Responsible for energy coupling to the transport system. This Chelativorans sp. (strain BNC1) protein is Ribose import ATP-binding protein RbsA.